The following is a 69-amino-acid chain: Cytochrome c oxidase subunit 8A, mitochondrial (69 aa).

The N-terminal 25 residues, 1-25 (MSVLTPLLLRGLTGSARRLPMPCAR), are a transit peptide targeting the mitochondrion. Positions 2–19 (SVLTPLLLRGLTGSARRL) match the SIFI-degron motif. Residues 26 to 36 (VHSKPPREQLG) lie on the Mitochondrial matrix side of the membrane. Residues 37-60 (TMDIAIGLTSCFVCFLLPSGWVLS) form a helical membrane-spanning segment. The Mitochondrial intermembrane portion of the chain corresponds to 61-69 (HLENYKKRE).

This sequence belongs to the cytochrome c oxidase VIII family. As to quaternary structure, component of the cytochrome c oxidase (complex IV, CIV), a multisubunit enzyme composed of 14 subunits. The complex is composed of a catalytic core of 3 subunits MT-CO1, MT-CO2 and MT-CO3, encoded in the mitochondrial DNA, and 11 supernumerary subunits COX4I, COX5A, COX5B, COX6A, COX6B, COX6C, COX7A, COX7B, COX7C, COX8 and NDUFA4, which are encoded in the nuclear genome. The complex exists as a monomer or a dimer and forms supercomplexes (SCs) in the inner mitochondrial membrane with NADH-ubiquinone oxidoreductase (complex I, CI) and ubiquinol-cytochrome c oxidoreductase (cytochrome b-c1 complex, complex III, CIII), resulting in different assemblies (supercomplex SCI(1)III(2)IV(1) and megacomplex MCI(2)III(2)IV(2)). In terms of processing, in response to mitochondrial stress, the precursor protein is ubiquitinated by the SIFI complex in the cytoplasm before mitochondrial import, leading to its degradation. Within the SIFI complex, UBR4 initiates ubiquitin chain that are further elongated or branched by KCMF1.

It localises to the mitochondrion inner membrane. It participates in energy metabolism; oxidative phosphorylation. In terms of biological role, component of the cytochrome c oxidase, the last enzyme in the mitochondrial electron transport chain which drives oxidative phosphorylation. The respiratory chain contains 3 multisubunit complexes succinate dehydrogenase (complex II, CII), ubiquinol-cytochrome c oxidoreductase (cytochrome b-c1 complex, complex III, CIII) and cytochrome c oxidase (complex IV, CIV), that cooperate to transfer electrons derived from NADH and succinate to molecular oxygen, creating an electrochemical gradient over the inner membrane that drives transmembrane transport and the ATP synthase. Cytochrome c oxidase is the component of the respiratory chain that catalyzes the reduction of oxygen to water. Electrons originating from reduced cytochrome c in the intermembrane space (IMS) are transferred via the dinuclear copper A center (CU(A)) of subunit 2 and heme A of subunit 1 to the active site in subunit 1, a binuclear center (BNC) formed by heme A3 and copper B (CU(B)). The BNC reduces molecular oxygen to 2 water molecules using 4 electrons from cytochrome c in the IMS and 4 protons from the mitochondrial matrix. In Nycticebus coucang (Slow loris), this protein is Cytochrome c oxidase subunit 8A, mitochondrial (COX8A).